A 732-amino-acid chain; its full sequence is Elongation factor 2 (732 aa).

Residues 19 to 228 (ELVRNIGIVA…TKITFKDIVE (210 aa)) form the tr-type G domain. GTP is bound by residues 28-35 (AHIDHGKT), 94-98 (DTPGH), and 148-151 (NKID). The residue at position 598 (His-598) is a Diphthamide.

The protein belongs to the TRAFAC class translation factor GTPase superfamily. Classic translation factor GTPase family. EF-G/EF-2 subfamily.

It localises to the cytoplasm. Its function is as follows. Catalyzes the GTP-dependent ribosomal translocation step during translation elongation. During this step, the ribosome changes from the pre-translocational (PRE) to the post-translocational (POST) state as the newly formed A-site-bound peptidyl-tRNA and P-site-bound deacylated tRNA move to the P and E sites, respectively. Catalyzes the coordinated movement of the two tRNA molecules, the mRNA and conformational changes in the ribosome. This chain is Elongation factor 2, found in Thermoplasma volcanium (strain ATCC 51530 / DSM 4299 / JCM 9571 / NBRC 15438 / GSS1).